A 205-amino-acid polypeptide reads, in one-letter code: Red chlorophyll catabolite reductase (205 aa).

The substrate site is built by Glu-39 and Asp-175.

As to quaternary structure, homodimer. In terms of processing, the N-terminus is blocked. In etiolated and green primary leaves. Low amount in roots.

The protein resides in the plastid. Its subcellular location is the chloroplast stroma. The enzyme catalyses primary fluorescent chlorophyll catabolite + 2 oxidized [2Fe-2S]-[ferredoxin] = red chlorophyll catabolite + 2 reduced [2Fe-2S]-[ferredoxin] + 3 H(+). Its pathway is porphyrin-containing compound metabolism; chlorophyll degradation. Catalyzes the key reaction of chlorophyll catabolism, porphyrin macrocycle cleavage of pheophorbide a (pheide a) to a primary fluorescent catabolite (pFCC). Works in a two-step reaction with pheophorbide a oxygenase (PaO) by reducing the C20/C1 double bond of the intermediate, RCC. This Hordeum vulgare (Barley) protein is Red chlorophyll catabolite reductase (rccR).